The following is a 436-amino-acid chain: Homeobox protein PKNOX1 (436 aa).

A compositionally biased stretch (polar residues) spans 1-20 (MMATQTLSIDSYQDGQQMQV). Positions 1–49 (MMATQTLSIDSYQDGQQMQVVTELKTEQDPNCSEPDAEGVSPPPVESQT) are disordered. A phosphoserine mark is found at Ser-33 and Ser-41. The MEIS N-terminal domain maps to 80-163 (GSEGTTSASF…MNSETLLSGE (84 aa)). Positions 259 to 321 (SKNKRGVLPK…NARRRILQPM (63 aa)) form a DNA-binding region, homeobox; TALE-type. The interval 401 to 436 (AGQSEDESVDSTEEDAGALAPAHISGLVLENSDSLQ) is disordered. The span at 404 to 416 (SEDESVDSTEEDA) shows a compositional bias: acidic residues.

The protein belongs to the TALE/MEIS homeobox family. As to quaternary structure, interacts with MN1. Ubiquitous. Isoform 2 is expressed in all examined tissues except in bone marrow.

It is found in the nucleus. In terms of biological role, activates transcription in the presence of PBX1A and HOXA1. This chain is Homeobox protein PKNOX1, found in Homo sapiens (Human).